Consider the following 128-residue polypeptide: Lymphocyte antigen 6D (128 aa).

Positions methionine 1–alanine 20 are cleaved as a signal peptide. A UPAR/Ly6 domain is found at leucine 21–serine 108. 5 cysteine pairs are disulfide-bonded: cysteine 23/cysteine 45, cysteine 26/cysteine 32, cysteine 38/cysteine 63, cysteine 67/cysteine 86, and cysteine 87/cysteine 92. A lipid anchor (GPI-anchor amidated serine) is attached at serine 98. Positions tryptophan 99–leucine 128 are cleaved as a propeptide — removed in mature form.

The protein localises to the cell membrane. Functionally, may act as a specification marker at earliest stage specification of lymphocytes between B- and T-cell development. Marks the earliest stage of B-cell specification. The protein is Lymphocyte antigen 6D (LY6D) of Bos taurus (Bovine).